Here is a 1143-residue protein sequence, read N- to C-terminus: cGMP-specific 3',5'-cyclic phosphodiesterase (1143 aa).

Composition is skewed to low complexity over residues 1 to 19 (MHGP…DVSS) and 31 to 45 (TTSS…ASSS). The disordered stretch occupies residues 1–167 (MHGPVSRSSS…KASTTASQQD (167 aa)). Polar residues predominate over residues 46-59 (KPLTNGANKTTIST). Positions 75 to 84 (GAIPASSSSG) are enriched in low complexity. The segment covering 96-107 (SNNNRPAATNRS) has biased composition (polar residues). Residues 131–153 (SSSSPSQSPSQTQASIQTQTSQQ) are compositionally biased toward low complexity. GAF domains are found at residues 272–424 (DIDV…GIGI) and 456–637 (NLEC…GLGI). Residues 667 to 990 (SQDQTEKLTQ…RNWQDLAEKV (324 aa)) form the PDEase domain. His743 functions as the Proton donor in the catalytic mechanism. Positions 747, 783, 784, and 894 each coordinate a divalent metal cation. 2 disordered regions span residues 1031–1060 (QQSQ…TGAL) and 1090–1143 (SHVS…CALL). Basic and acidic residues-rich tracts occupy residues 1036–1047 (GSEDSHTPEHQR) and 1090–1100 (SHVSEDMDDKS). Positions 1109 to 1127 (ASGSMGRMSASSSTSSTGG) are enriched in low complexity. The span at 1133-1143 (SKKRSKLCALL) shows a compositional bias: basic residues. The residue at position 1140 (Cys1140) is a Cysteine methyl ester. The S-farnesyl cysteine moiety is linked to residue Cys1140. Positions 1141-1143 (ALL) are cleaved as a propeptide — removed in mature form.

It belongs to the cyclic nucleotide phosphodiesterase family. In terms of assembly, interacts with PrBP. It depends on a divalent metal cation as a cofactor.

The protein localises to the cell membrane. It catalyses the reaction 3',5'-cyclic GMP + H2O = GMP + H(+). In terms of biological role, has a role regulating cGMP transport in Malpighian tubule principal cells. The sequence is that of cGMP-specific 3',5'-cyclic phosphodiesterase from Drosophila simulans (Fruit fly).